A 298-amino-acid polypeptide reads, in one-letter code: ADP/ATP translocase 3 (298 aa).

Position 1 is an N-acetylmethionine (Met-1). Residues 1-7 (MTEQAIS) lie on the Mitochondrial intermembrane side of the membrane. At Thr-2 the chain carries N-acetylthreonine; in ADP/ATP translocase 3, N-terminally processed. A Solcar 1 repeat occupies 6-98 (ISFAKDFLAG…FAFKDKYKQI (93 aa)). Residues 8–37 (FAKDFLAGGIAAAISKTAVAPIERVKLLLQ) form a helical membrane-spanning segment. The Mitochondrial matrix portion of the chain corresponds to 38-74 (VQHASKQIAADKQYKGIVDCIVRIPKEQGVLSFWRGN). Lys-52 is modified (N6,N6,N6-trimethyllysine). A helical membrane pass occupies residues 75–99 (LANVIRYFPTQALNFAFKDKYKQIF). Positions 80 and 92 each coordinate ADP. Residues 100 to 109 (LGGVDKHTQF) are Mitochondrial intermembrane-facing. The residue at position 105 (Lys-105) is an N6-acetyllysine. The helical transmembrane segment at 110–130 (WRYFAGNLASGGAAGATSLCF) threads the bilayer. Solcar repeat units lie at residues 111 to 201 (RYFA…AKGM) and 212 to 297 (VSWM…LKKV). Residues 131 to 178 (VYPLDFARTRLAADVGKSGTEREFRGLGDCLVKITKSDGIRGLYQGFS) are Mitochondrial matrix-facing. Residues 179–199 (VSVQGIIIYRAAYFGVYDTAK) form a helical membrane-spanning segment. Over 200 to 210 (GMLPDPKNTHI) the chain is Mitochondrial intermembrane. Residues 211–231 (VVSWMIAQTVTAVAGVVSYPF) traverse the membrane as a helical segment. The Mitochondrial matrix portion of the chain corresponds to 232–273 (DTVRRRMMMQSGRKGADIMYTGTVDCWRKIFRDEGGKAFFKG). Arg-235 contributes to the ADP binding site. The important for transport activity stretch occupies residues 235 to 240 (RRRMMM). A Nucleotide carrier signature motif motif is present at residues 235 to 240 (RRRMMM). The residue at position 268 (Lys-268) is an N6-acetyllysine. The chain crosses the membrane as a helical span at residues 274 to 291 (AWSNVLRGMGGAFVLVLY). Residues 292–298 (DELKKVI) lie on the Mitochondrial intermembrane side of the membrane.

Belongs to the mitochondrial carrier (TC 2.A.29) family. In terms of assembly, monomer. Found in a complex with ARL2, ARL2BP and SLC25A6/ANT3. As to quaternary structure, (Microbial infection) Interacts with influenza A virus PB1-F2 protein. (Microbial infection) Interacts with HIV-1 Vpr. In terms of processing, trimethylated by ANTKMT at Lys-52. Expressed in erythrocytes (at protein level).

The protein localises to the mitochondrion inner membrane. The protein resides in the membrane. The enzyme catalyses ADP(in) + ATP(out) = ADP(out) + ATP(in). It catalyses the reaction H(+)(in) = H(+)(out). The matrix-open state (m-state) is inhibited by the membrane-permeable bongkrekic acid (BKA). The cytoplasmic-open state (c-state) is inhibited by the membrane-impermeable toxic inhibitor carboxyatractyloside (CATR). Proton transporter activity is inhibited by ADP:ATP antiporter activity. Its function is as follows. ADP:ATP antiporter that mediates import of ADP into the mitochondrial matrix for ATP synthesis, and export of ATP out to fuel the cell. Cycles between the cytoplasmic-open state (c-state) and the matrix-open state (m-state): operates by the alternating access mechanism with a single substrate-binding site intermittently exposed to either the cytosolic (c-state) or matrix (m-state) side of the inner mitochondrial membrane. In addition to its ADP:ATP antiporter activity, also involved in mitochondrial uncoupling and mitochondrial permeability transition pore (mPTP) activity. Plays a role in mitochondrial uncoupling by acting as a proton transporter: proton transport uncouples the proton flows via the electron transport chain and ATP synthase to reduce the efficiency of ATP production and cause mitochondrial thermogenesis. Proton transporter activity is inhibited by ADP:ATP antiporter activity, suggesting that SLC25A6/ANT3 acts as a master regulator of mitochondrial energy output by maintaining a delicate balance between ATP production (ADP:ATP antiporter activity) and thermogenesis (proton transporter activity). Proton transporter activity requires free fatty acids as cofactor, but does not transport it. Also plays a key role in mPTP opening, a non-specific pore that enables free passage of the mitochondrial membranes to solutes of up to 1.5 kDa, and which contributes to cell death. It is however unclear if SLC25A6/ANT3 constitutes a pore-forming component of mPTP or regulates it. In Homo sapiens (Human), this protein is ADP/ATP translocase 3.